A 109-amino-acid polypeptide reads, in one-letter code: Keratin, type II microfibrillar (109 aa).

The segment at 1-10 (QNRQCCESNL) is linker 1. The 109-residue stretch at 1 to 109 (QNRQCCESNL…RLYEEEIRVL (109 aa)) folds into the IF rod domain. Residues 11–109 (EPLFSGYIET…RLYEEEIRVL (99 aa)) are coil 1B.

Belongs to the intermediate filament family.

Wool microfibrillar keratin. In Ovis aries (Sheep), this protein is Keratin, type II microfibrillar.